Here is a 21-residue protein sequence, read N- to C-terminus: Nigrocin-2 (21 aa).

An intrachain disulfide couples Cys-15 to Cys-21.

In terms of tissue distribution, expressed by the skin dorsal glands.

Its subcellular location is the secreted. Functionally, thanks to its single linear amphipathic alpha-helix, may integrate into membrane phospholipids, leading to lysis of the membrane. Shows antibacterial activity against both Gram-positive and Gram-negative bacteria and against the fungus C.albicans. Has no hemolytic activity. The polypeptide is Nigrocin-2 (Pelophylax nigromaculatus (Black-spotted frog)).